Here is a 593-residue protein sequence, read N- to C-terminus: Actin-histidine N-methyltransferase (593 aa).

The interval 1 to 21 (MGKKSRVKTQKSGTGATAAVS) is disordered. S-adenosyl-L-methionine is bound by residues R75, 104–106 (EGF), R254, 275–279 (DMCNH), and 325–327 (SGF). The 221-residue stretch at 94 to 314 (EGFEIANFEE…AGEQIYIFYG (221 aa)) folds into the SET domain. The tract at residues 549 to 593 (GFVNGENSLFNGTKSESENLIKEESNRETEDAKESSSESTDEVKE) is disordered. Residues 553–562 (GENSLFNGTK) show a composition bias toward polar residues. Positions 563–593 (SESENLIKEESNRETEDAKESSSESTDEVKE) are enriched in basic and acidic residues.

The protein belongs to the class V-like SAM-binding methyltransferase superfamily. SETD3 actin-histidine methyltransferase family.

It is found in the cytoplasm. It catalyses the reaction L-histidyl-[protein] + S-adenosyl-L-methionine = N(tele)-methyl-L-histidyl-[protein] + S-adenosyl-L-homocysteine + H(+). Functionally, protein-histidine N-methyltransferase that specifically mediates 3-methylhistidine (tele-methylhistidine) methylation of actin at 'His-73'. Does not have protein-lysine N-methyltransferase activity and probably only catalyzes histidine methylation of actin. This Gallus gallus (Chicken) protein is Actin-histidine N-methyltransferase.